The primary structure comprises 336 residues: Isopentenyl-diphosphate delta-isomerase (336 aa).

5 to 6 contributes to the substrate binding site; that stretch reads RK. FMN contacts are provided by residues 60 to 62, S90, and N117; that span reads AMT. Q147 is a binding site for substrate. E148 provides a ligand contact to Mg(2+). Residues K179, S204, T209, 253–255, and 274–275 each bind FMN; these read GVR and SR.

Belongs to the IPP isomerase type 2 family. As to quaternary structure, homooctamer. Dimer of tetramers. FMN is required as a cofactor. NADPH serves as cofactor. The cofactor is Mg(2+).

It localises to the cytoplasm. It catalyses the reaction isopentenyl diphosphate = dimethylallyl diphosphate. Its function is as follows. Involved in the biosynthesis of isoprenoids. Catalyzes the 1,3-allylic rearrangement of the homoallylic substrate isopentenyl (IPP) to its allylic isomer, dimethylallyl diphosphate (DMAPP). This chain is Isopentenyl-diphosphate delta-isomerase, found in Streptococcus pneumoniae (strain ATCC BAA-255 / R6).